The primary structure comprises 387 residues: Phosphoglycerate kinase (387 aa).

Substrate-binding positions include 21–23 (DLN), Arg36, 59–62 (HLGR), Arg113, and Arg146. Residues Lys197, Glu314, and 340–343 (GGDT) each bind ATP.

It belongs to the phosphoglycerate kinase family. Monomer.

It is found in the cytoplasm. It catalyses the reaction (2R)-3-phosphoglycerate + ATP = (2R)-3-phospho-glyceroyl phosphate + ADP. It participates in carbohydrate degradation; glycolysis; pyruvate from D-glyceraldehyde 3-phosphate: step 2/5. This Aliivibrio fischeri (strain ATCC 700601 / ES114) (Vibrio fischeri) protein is Phosphoglycerate kinase.